Consider the following 777-residue polypeptide: Glucocorticoid receptor (777 aa).

The span at 1 to 14 shows a compositional bias: basic and acidic residues; sequence MDSKESLTPGKEEN. The segment at 1–22 is disordered; that stretch reads MDSKESLTPGKEENPSSVLTQE. The interval 1-420 is modulating; sequence MDSKESLTPG…TATTGPPPKL (420 aa). Thr-8 is modified (phosphothreonine). Omega-N-methylarginine is present on Arg-23. Phosphoserine occurs at positions 45, 113, 134, and 141. Residues 130–182 form a disordered region; the sequence is NRSTSVPENPKSSASSSVSAAPKEKEFPKTHSDVSSEQQNLKGQTGSNGGNVK. Over residues 134 to 150 the composition is skewed to low complexity; the sequence is SVPENPKSSASSSVSAA. Basic and acidic residues predominate over residues 151–163; sequence PKEKEFPKTHSDV. A compositionally biased stretch (polar residues) spans 164 to 174; that stretch reads SSEQQNLKGQT. Residues Ser-203, Ser-211, and Ser-226 each carry the phosphoserine modification. Lys-258 is covalently cross-linked (Glycyl lysine isopeptide (Lys-Gly) (interchain with G-Cter in SUMO2)). Phosphoserine is present on Ser-267. Residues Lys-277 and Lys-293 each participate in a glycyl lysine isopeptide (Lys-Gly) (interchain with G-Cter in SUMO); alternate cross-link. Residues Lys-277 and Lys-293 each participate in a glycyl lysine isopeptide (Lys-Gly) (interchain with G-Cter in SUMO2); alternate cross-link. Residues 394–414 show a composition bias toward low complexity; it reads SSPSMRPDVSSPPSSSSTATT. Residues 394-415 form a disordered region; sequence SSPSMRPDVSSPPSSSSTATTG. At Ser-404 the chain carries Phosphoserine. Lys-419 is covalently cross-linked (Glycyl lysine isopeptide (Lys-Gly) (interchain with G-Cter in ubiquitin)). 2 NR C4-type zinc fingers span residues 421–441 and 457–481; these read CLVC…CGSC and CAGR…YRKC. The segment at residues 421 to 486 is a DNA-binding region (nuclear receptor); that stretch reads CLVCSDEASG…RYRKCLQAGM (66 aa). 4 positions are modified to N6-acetyllysine: Lys-480, Lys-492, Lys-494, and Lys-495. Positions 485–777 are interaction with CLOCK; it reads GMNLEARKTK…NIKKLLFHQK (293 aa). The interval 487 to 523 is hinge; the sequence is NLEARKTKKKIKGIQQATTGVSQETSENPANKTIVPA. One can recognise an NR LBD domain in the interval 524-758; that stretch reads TLPQLTPTLV…FPEMLAEIIT (235 aa). The tract at residues 532–697 is interaction with CRY1; it reads LVSLLEVIEP…EIRMTYIKEL (166 aa). Lys-703 participates in a covalent cross-link: Glycyl lysine isopeptide (Lys-Gly) (interchain with G-Cter in SUMO).

Belongs to the nuclear hormone receptor family. NR3 subfamily. As to quaternary structure, heteromultimeric cytoplasmic complex with HSP90AA1, HSPA1A/HSPA1B, and FKBP5 or another immunophilin such as PPID, STIP1, or the immunophilin homolog PPP5C. Upon ligand binding FKBP5 dissociates from the complex and FKBP4 takes its place, thereby linking the complex to dynein and mediating transport to the nucleus, where the complex dissociates. Probably forms a complex composed of chaperones HSP90 and HSP70, co-chaperones CDC37, PPP5C, TSC1 and client protein TSC2, CDK4, AKT, RAF1 and NR3C1; this complex does not contain co-chaperones STIP1/HOP and PTGES3/p23. Directly interacts with UNC45A. Binds to DNA as a homodimer, and as heterodimer with NR3C2 or the retinoid X receptor. Binds STAT5A and STAT5B homodimers and heterodimers. Interacts with NRIP1, POU2F1, POU2F2 and TRIM28. Interacts with several coactivator complexes, including the SMARCA4 complex, CREBBP/EP300, TADA2L (Ada complex) and p160 coactivators such as NCOA2 and NCOA6. Interaction with BAG1 inhibits transactivation. Interacts with HEXIM1 and TGFB1I1. Interacts with NCOA1. Interacts with NCOA3, SMARCA4, SMARCC1, SMARCD1, and SMARCE1. Interacts with CLOCK, CRY1 and CRY2 in a ligand-dependent fashion. Interacts with CIART. Interacts with RWDD3. Interacts with UBE2I/UBC9 and this interaction is enhanced in the presence of RWDD3. Interacts with GRIP1. Interacts with NR4A3 (via nuclear receptor DNA-binding domain), represses transcription activity of NR4A3 on the POMC promoter Nur response element (NurRE). Directly interacts with PNRC2 to attract and form a complex with UPF1 and DCP1A; the interaction leads to rapid mRNA degradation. Interacts with GSK3B. Interacts with FNIP1 and FNIP2. Interacts (via C-terminus) with HNRNPU (via C-terminus). Interacts with MCM3AP. Interacts (via domain NR LBD) with HSP90AA1 and HSP90AB1. In the absence of hormonal ligand, interacts with TACC1. Interacts (via NR LBD domain) with ZNF764 (via KRAB domain); the interaction regulates transcription factor activity of NR3C1 by directing its actions toward certain biologic pathways. In terms of processing, acetylation by CLOCK reduces its binding to glucocorticoid response elements and its transcriptional activity. Increased proteasome-mediated degradation in response to glucocorticoids. Post-translationally, phosphorylated in the absence of hormone; becomes hyperphosphorylated in the presence of glucocorticoid. The Ser-203, Ser-226 and Ser-404-phosphorylated forms are mainly cytoplasmic, and the Ser-211-phosphorylated form is nuclear. Phosphorylation at Ser-211 increases transcriptional activity. Phosphorylation at Ser-203, Ser-226 and Ser-404 decreases signaling capacity. Phosphorylation at Ser-404 may protect from glucocorticoid-induced apoptosis. Phosphorylation at Ser-203 and Ser-211 is not required in regulation of chromosome segregation. May be dephosphorylated by PPP5C, attenuates NR3C1 action. In terms of processing, ubiquitinated by UBR5, leading to its degradation: UBR5 specifically recognizes and binds ligand-bound NR3C1 when it is not associated with coactivators (NCOAs). In presence of NCOAs, the UBR5-degron is not accessible, preventing its ubiquitination and degradation. Sumoylation at Lys-277 and Lys-293 negatively regulates its transcriptional activity. Sumoylation at Lys-703 positively regulates its transcriptional activity in the presence of RWDD3. Sumoylation at Lys-277 and Lys-293 is dispensable whereas sumoylation at Lys-703 is critical for the stimulatory effect of RWDD3 on its transcriptional activity. Heat shock increases sumoylation in a RWDD3-dependent manner.

The protein localises to the cytoplasm. It localises to the nucleus. Its subcellular location is the mitochondrion. The protein resides in the cytoskeleton. It is found in the spindle. The protein localises to the microtubule organizing center. It localises to the centrosome. Its subcellular location is the chromosome. The protein resides in the nucleoplasm. Receptor for glucocorticoids (GC). Has a dual mode of action: as a transcription factor that binds to glucocorticoid response elements (GRE), both for nuclear and mitochondrial DNA, and as a modulator of other transcription factors. Affects inflammatory responses, cellular proliferation and differentiation in target tissues. Involved in chromatin remodeling. Plays a role in rapid mRNA degradation by binding to the 5' UTR of target mRNAs and interacting with PNRC2 in a ligand-dependent manner which recruits the RNA helicase UPF1 and the mRNA-decapping enzyme DCP1A, leading to RNA decay. Could act as a coactivator for STAT5-dependent transcription upon growth hormone (GH) stimulation and could reveal an essential role of hepatic GR in the control of body growth. Mediates glucocorticoid-induced apoptosis. Promotes accurate chromosome segregation during mitosis. May act as a tumor suppressor. May play a negative role in adipogenesis through the regulation of lipolytic and antilipogenic gene expression. The sequence is that of Glucocorticoid receptor (NR3C1) from Saimiri boliviensis boliviensis (Bolivian squirrel monkey).